The following is a 446-amino-acid chain: Dihydroorotate dehydrogenase (quinone), mitochondrial (446 aa).

Residues 1 to 13 (MHSRPLPTLGRHA) constitute a mitochondrion transit peptide. Residues 40–57 (AILYTAGILGGAFAGYYL) traverse the membrane as a helical segment. Residues 125–129 (AGLDK) and S149 each bind FMN. A substrate-binding site is contributed by K129. 174 to 178 (NRYGF) serves as a coordination point for substrate. 2 residues coordinate FMN: N222 and N252. Residues N252 and 252-257 (NVSSPN) each bind substrate. Residue S255 is the Nucleophile of the active site. Residues K303 and S331 each coordinate FMN. 332–333 (NT) contacts substrate. FMN is bound by residues G357, G387, and 408–409 (YT).

The protein belongs to the dihydroorotate dehydrogenase family. Type 2 subfamily. It depends on FMN as a cofactor.

It is found in the mitochondrion inner membrane. The catalysed reaction is (S)-dihydroorotate + a quinone = orotate + a quinol. Its pathway is pyrimidine metabolism; UMP biosynthesis via de novo pathway; orotate from (S)-dihydroorotate (quinone route): step 1/1. The activity is dependent of the presence of oxygen. Functionally, catalyzes the conversion of dihydroorotate to orotate with quinone as electron acceptor. The sequence is that of Dihydroorotate dehydrogenase (quinone), mitochondrial (URA9) from Lachancea kluyveri (strain ATCC 58438 / CBS 3082 / BCRC 21498 / NBRC 1685 / JCM 7257 / NCYC 543 / NRRL Y-12651) (Yeast).